Reading from the N-terminus, the 142-residue chain is Transcription antitermination protein NusB (142 aa).

It belongs to the NusB family. Monomer or homodimer; in equilibrium, with a preference for the monomer. Dimerization may be employed to package NusB in an inactive form until recruitment into antitermination complexes.

Involved in transcription antitermination. Required for transcription of ribosomal RNA (rRNA) genes. Binds specifically to the boxA antiterminator sequence of the ribosomal RNA (rrn) operons. This is Transcription antitermination protein NusB from Thermotoga maritima (strain ATCC 43589 / DSM 3109 / JCM 10099 / NBRC 100826 / MSB8).